A 57-amino-acid polypeptide reads, in one-letter code: MKYFVVLVVLALILAITVGPSDAVFIDILDKMENAIHKAAQAGIGIAKPIEKMILPK.

An N-terminal signal peptide occupies residues 1–23 (MKYFVVLVVLALILAITVGPSDA).

The protein belongs to the andropin family. In terms of tissue distribution, ejaculatory duct of adult males.

It localises to the secreted. Functionally, male-specific peptide with moderate activity against Gram-positive bacteria. This chain is Andropin (Anp), found in Drosophila mauritiana (Fruit fly).